The chain runs to 673 residues: L-type lectin-domain containing receptor kinase SIT2 (673 aa).

The first 27 residues, 1 to 27, serve as a signal peptide directing secretion; the sequence is MVLPKPEMPFFVLLLFLGLGCLRPAAA. The Extracellular portion of the chain corresponds to 28–296; the sequence is TDERFVFNGF…FPKPRSKTLE (269 aa). Residues 32-270 are legume-lectin like; it reads FVFNGFTGAN…VLGWSFKMNG (239 aa). 9 N-linked (GlcNAc...) asparagine glycosylation sites follow: Asn41, Asn60, Asn82, Asn118, Asn138, Asn191, Asn214, Asn235, and Asn276. The chain crosses the membrane as a helical span at residues 297–317; it reads IVLPIASAVLVFAVAAAVFVF. At 318-673 the chain is on the cytoplasmic side; the sequence is MRRRRMFSEL…GTFSDLSGGR (356 aa). The 280-residue stretch at 352–631 folds into the Protein kinase domain; it reads FSDKRLLGIG…LEGDVPLPEL (280 aa). ATP-binding positions include 358–366 and Lys381; that span reads LGIGGFGRV. Asp477 functions as the Proton acceptor in the catalytic mechanism.

In the C-terminal section; belongs to the protein kinase superfamily. Ser/Thr protein kinase family. It in the N-terminal section; belongs to the leguminous lectin family. In terms of tissue distribution, mainly expressed in root epidermal cells.

It localises to the cell membrane. It carries out the reaction L-seryl-[protein] + ATP = O-phospho-L-seryl-[protein] + ADP + H(+). It catalyses the reaction L-threonyl-[protein] + ATP = O-phospho-L-threonyl-[protein] + ADP + H(+). In terms of biological role, lectin-domain containing receptor kinase involved in salt stress response. Acts as a negative regulator of salt tolerance. This Oryza sativa subsp. japonica (Rice) protein is L-type lectin-domain containing receptor kinase SIT2.